We begin with the raw amino-acid sequence, 410 residues long: Dipeptidase ataJ (410 aa).

Zn(2+) is bound by residues histidine 27, aspartate 29, and glutamate 138. A substrate-binding site is contributed by histidine 165. The interval 180–200 (TSSPWSEYGGQTHDPGDEPSR) is disordered. Residues arginine 258 and aspartate 318 each contribute to the substrate site.

The protein belongs to the metallo-dependent hydrolases superfamily. Peptidase M19 family. Zn(2+) serves as cofactor.

The catalysed reaction is an L-aminoacyl-L-amino acid + H2O = 2 an L-alpha-amino acid. Its pathway is mycotoxin biosynthesis. Dipeptidase; part of the gene cluster that mediates the biosynthesis of acetylaranotin, a member of the epipolythiodioxopiperazine (ETP) class of toxins characterized by a disulfide-bridged cyclic dipeptide. The first step of acetylaranotin biosynthesis is performed by the NRPS ataP which produces diketopiperazine cyclo-L-Phe-L-Phe via the condensation of 2 phenylalanines (L-Phe). The ataC domain of ataTC then catalyzes the formation of bishydroxylation of cyclo-L-Phe-L-Phe. The glutathione S-transferase domain ataG in ataIMG further catalyzes the conjugation of two glutathiones to the bishydroxylated intermediate. Next, the dipeptidase ataJ removes the Glu residues. The following step is performed by the carbon sulfur lyase domain ataI of ataIMG which may convert the bis-cysteinyl adduct to yield an epidithiol intermediate. The ataT domain from ataTC then catalyzes the oxidation of the free dithiols, followed by a cyclization step catalyzed by the cytochrome P450 ataF. AtaF probably acts as an epoxidase to promote a dual epoxidation formation at C8 and C9 along with C8' and C9', followed by the spontaneous nucleophilic attack of the amide nitrogens N10 and N10' to yield an intermediate with the pyrrolidine partial structure. The final steps of acetylaranotin biosynthesis involve the acetylation and ring rearrangement of an epitetrathiodiketopiperazine intermediate to produce acetylaranotin. AtaH probably catalyzes the acetylation of epitetrathiodiketopiperazine to produce a diacetate and ataY is responsible for the formation of the dihydrooxepin moiety that converts the diacetate intermediate to acetylaranotin via acetylapoaranotin. Both enzymes could function independently in the absence of the other. The acetylaranotin bis-thiomethyltransferase ataS located outside of acetylaranotin gene cluster is the main thiomethyltransferase responsible for converting acetylaranotin and its related intermediates to their methylated forms. The protein is Dipeptidase ataJ of Aspergillus terreus (strain NIH 2624 / FGSC A1156).